Reading from the N-terminus, the 104-residue chain is Guanidinium exporter (104 aa).

Over Met-1–Trp-3 the chain is Cytoplasmic. The chain crosses the membrane as a helical span at residues Ile-4 to Phe-26. The Periplasmic portion of the chain corresponds to Thr-27–Ser-32. The chain crosses the membrane as a helical span at residues Ile-33–Met-50. Over Lys-51–Pro-54 the chain is Cytoplasmic. The helical transmembrane segment at Ala-55–Val-77 threads the bilayer. Topologically, residues Phe-78–Asn-83 are periplasmic. Residues Ile-84–Ala-103 form a helical membrane-spanning segment. Ser-104 is a topological domain (cytoplasmic).

It belongs to the drug/metabolite transporter (DMT) superfamily. Small multidrug resistance (SMR) (TC 2.A.7.1) family. Gdx/SugE subfamily.

Its subcellular location is the cell inner membrane. Its function is as follows. Guanidinium ion exporter. Couples guanidinium export to the proton motive force, exchanging one guanidinium ion for two protons. This is Guanidinium exporter from Proteus vulgaris.